Consider the following 272-residue polypeptide: HMP-PP phosphatase (272 aa).

The active-site Nucleophile is the aspartate 8. Mg(2+) contacts are provided by aspartate 8, aspartate 10, and aspartate 212.

The protein belongs to the HAD-like hydrolase superfamily. Cof family. Mg(2+) is required as a cofactor.

It carries out the reaction 4-amino-2-methyl-5-(diphosphooxymethyl)pyrimidine + H2O = 4-amino-2-methyl-5-(phosphooxymethyl)pyrimidine + phosphate + H(+). Catalyzes the hydrolysis of 4-amino-2-methyl-5-hydroxymethylpyrimidine pyrophosphate (HMP-PP) to 4-amino-2-methyl-5-hydroxymethylpyrimidine phosphate (HMP-P). The protein is HMP-PP phosphatase of Escherichia coli O8 (strain IAI1).